The primary structure comprises 417 residues: Arginine biosynthesis bifunctional protein ArgJ (417 aa).

Residues Thr162, Lys188, Thr199, Glu289, Asn412, and Ser417 each contribute to the substrate site. The active-site Nucleophile is Thr199.

The protein belongs to the ArgJ family. As to quaternary structure, heterotetramer of two alpha and two beta chains.

It localises to the cytoplasm. It catalyses the reaction N(2)-acetyl-L-ornithine + L-glutamate = N-acetyl-L-glutamate + L-ornithine. The enzyme catalyses L-glutamate + acetyl-CoA = N-acetyl-L-glutamate + CoA + H(+). It participates in amino-acid biosynthesis; L-arginine biosynthesis; L-ornithine and N-acetyl-L-glutamate from L-glutamate and N(2)-acetyl-L-ornithine (cyclic): step 1/1. It functions in the pathway amino-acid biosynthesis; L-arginine biosynthesis; N(2)-acetyl-L-ornithine from L-glutamate: step 1/4. In terms of biological role, catalyzes two activities which are involved in the cyclic version of arginine biosynthesis: the synthesis of N-acetylglutamate from glutamate and acetyl-CoA as the acetyl donor, and of ornithine by transacetylation between N(2)-acetylornithine and glutamate. This Nitrobacter winogradskyi (strain ATCC 25391 / DSM 10237 / CIP 104748 / NCIMB 11846 / Nb-255) protein is Arginine biosynthesis bifunctional protein ArgJ.